The sequence spans 144 residues: Ig heavy chain V region MOPC 141 (144 aa).

A signal peptide spans 1–19 (MAVLALLFCLATFPSCILS). One can recognise an Ig-like domain in the interval 20 to 130 (QVQLKESGPG…YYGRSDKYFT (111 aa)).

The polypeptide is Ig heavy chain V region MOPC 141 (Mus musculus (Mouse)).